The sequence spans 186 residues: Elongation factor P (186 aa).

Belongs to the elongation factor P family.

The protein localises to the cytoplasm. Its pathway is protein biosynthesis; polypeptide chain elongation. Functionally, involved in peptide bond synthesis. Stimulates efficient translation and peptide-bond synthesis on native or reconstituted 70S ribosomes in vitro. Probably functions indirectly by altering the affinity of the ribosome for aminoacyl-tRNA, thus increasing their reactivity as acceptors for peptidyl transferase. This is Elongation factor P from Ruminiclostridium cellulolyticum (strain ATCC 35319 / DSM 5812 / JCM 6584 / H10) (Clostridium cellulolyticum).